The primary structure comprises 128 residues: Large ribosomal subunit protein bL17 (128 aa).

It belongs to the bacterial ribosomal protein bL17 family. As to quaternary structure, part of the 50S ribosomal subunit. Contacts protein L32.

This Streptococcus suis (strain 98HAH33) protein is Large ribosomal subunit protein bL17.